A 356-amino-acid chain; its full sequence is MRVTDFSFELPESLIAHYPMPERSSCRLLSLDGPTGALTHGTFTDLLDKLNPGDLLVFNNTRVIPARLFGRKASGGKIEVLVERMLDDKRILAHIRASKAPKPGAELLLGDDESINATMTARHGALFEVEFNDQRSVLDILNSIGHMPLPPYIDRPDEDADRELYQTVYSEKPGAVAAPTAGLHFDEPLLEKLRAKGVEMAFVTLHVGAGTFQPVRVDTIEDHIMHSEYAEVPQDVVDAVLAAKARGNRVIAVGTTSVRSLESAAQAAKNDLIEPLFDDTQIFIYPGFQYKVVDALVTNFHLPESTLIMLVSAFAGYQHTMNAYKAAVEEKYRFFSYGDAMFITYNPQAINERVGE.

It belongs to the QueA family. Monomer.

It is found in the cytoplasm. The catalysed reaction is 7-aminomethyl-7-carbaguanosine(34) in tRNA + S-adenosyl-L-methionine = epoxyqueuosine(34) in tRNA + adenine + L-methionine + 2 H(+). The protein operates within tRNA modification; tRNA-queuosine biosynthesis. Transfers and isomerizes the ribose moiety from AdoMet to the 7-aminomethyl group of 7-deazaguanine (preQ1-tRNA) to give epoxyqueuosine (oQ-tRNA). This Escherichia coli O6:H1 (strain CFT073 / ATCC 700928 / UPEC) protein is S-adenosylmethionine:tRNA ribosyltransferase-isomerase.